The following is a 256-amino-acid chain: Ribonuclease HII (256 aa).

Residues 72-256 (QYIAGMDEVG…SFNPVPKYLN (185 aa)) enclose the RNase H type-2 domain. The a divalent metal cation site is built by Asp-78, Glu-79, and Asp-170.

It belongs to the RNase HII family. Mn(2+) is required as a cofactor. It depends on Mg(2+) as a cofactor.

Its subcellular location is the cytoplasm. It catalyses the reaction Endonucleolytic cleavage to 5'-phosphomonoester.. Endonuclease that specifically degrades the RNA of RNA-DNA hybrids. In Limosilactobacillus reuteri (strain DSM 20016) (Lactobacillus reuteri), this protein is Ribonuclease HII.